Reading from the N-terminus, the 472-residue chain is Probable low-salt glycan biosynthesis flippase Agl15 (472 aa).

The next 13 membrane-spanning stretches (helical) occupy residues 8-28 (IKLF…ITFF), 38-58 (GVFF…DFGL), 77-97 (SSAI…IVVF), 109-129 (FAVY…AVSV), 164-184 (AEAL…WGLS), 209-229 (VVSS…IGIF), 244-264 (VTAI…PQVS), 289-309 (LVIP…GIVF), 315-335 (IASY…VHVI), 354-374 (VISV…FGIV), 375-395 (GAAV…AHYL), 408-428 (IGWC…FKTL), and 434-454 (LIQL…ITLL).

The protein belongs to the AglR/Agl15 family.

It is found in the cell membrane. The protein operates within protein modification; protein glycosylation. It participates in cell surface structure biogenesis; S-layer biogenesis. In terms of biological role, flippase involved in N-glycan biosynthetic pathway that takes place under low-salt conditions (1.75 M instead of 3.4 M). Participates in the formation of the tetrasaccharide present at 'Asn-532' of S-layer glycoprotein Csg, consisting of a sulfated hexose, 2 hexoses and rhamnose. Probably moves the tetrasaccharide from the cytosolic to the extracytosolic side of the membrane. The sequence is that of Probable low-salt glycan biosynthesis flippase Agl15 (agl15) from Haloferax volcanii (strain ATCC 29605 / DSM 3757 / JCM 8879 / NBRC 14742 / NCIMB 2012 / VKM B-1768 / DS2) (Halobacterium volcanii).